Consider the following 252-residue polypeptide: 3-dehydroquinate dehydratase (252 aa).

Residues Ser21, 46–48, and Arg82 each bind 3-dehydroquinate; that span reads EWR. The active-site Proton donor/acceptor is the His143. Residue Lys170 is the Schiff-base intermediate with substrate of the active site. Positions 213, 232, and 236 each coordinate 3-dehydroquinate.

The protein belongs to the type-I 3-dehydroquinase family. As to quaternary structure, homodimer.

It carries out the reaction 3-dehydroquinate = 3-dehydroshikimate + H2O. It participates in metabolic intermediate biosynthesis; chorismate biosynthesis; chorismate from D-erythrose 4-phosphate and phosphoenolpyruvate: step 3/7. In terms of biological role, involved in the third step of the chorismate pathway, which leads to the biosynthesis of aromatic amino acids. Catalyzes the cis-dehydration of 3-dehydroquinate (DHQ) and introduces the first double bond of the aromatic ring to yield 3-dehydroshikimate. The protein is 3-dehydroquinate dehydratase of Salmonella choleraesuis (strain SC-B67).